A 492-amino-acid polypeptide reads, in one-letter code: Acetyl-coenzyme A carboxylase carboxyl transferase subunit beta, chloroplastic (492 aa).

The interval 198 to 219 (STNGSDLTISESSNESESSNES) is disordered. The 265-residue stretch at 228–492 (LWVQCENCYG…FHGRFPLNQN (265 aa)) folds into the CoA carboxyltransferase N-terminal domain. Residues Cys232, Cys235, Cys251, and Cys254 each contribute to the Zn(2+) site. The C4-type zinc-finger motif lies at 232 to 254 (CENCYGLNYKKFLKSKMYLCEQC).

The protein belongs to the AccD/PCCB family. In terms of assembly, acetyl-CoA carboxylase is a heterohexamer composed of biotin carboxyl carrier protein, biotin carboxylase and 2 subunits each of ACCase subunit alpha and ACCase plastid-coded subunit beta (accD). Zn(2+) serves as cofactor.

It localises to the plastid. It is found in the chloroplast stroma. The catalysed reaction is N(6)-carboxybiotinyl-L-lysyl-[protein] + acetyl-CoA = N(6)-biotinyl-L-lysyl-[protein] + malonyl-CoA. It participates in lipid metabolism; malonyl-CoA biosynthesis; malonyl-CoA from acetyl-CoA: step 1/1. In terms of biological role, component of the acetyl coenzyme A carboxylase (ACC) complex. Biotin carboxylase (BC) catalyzes the carboxylation of biotin on its carrier protein (BCCP) and then the CO(2) group is transferred by the transcarboxylase to acetyl-CoA to form malonyl-CoA. This chain is Acetyl-coenzyme A carboxylase carboxyl transferase subunit beta, chloroplastic, found in Citrus sinensis (Sweet orange).